Consider the following 359-residue polypeptide: Pyruvate dehydrogenase E1 component subunit beta, mitochondrial (359 aa).

The N-terminal 30 residues, 1–30, are a transit peptide targeting the mitochondrion; that stretch reads MAAVSGLVRRPLREVSRLLKRRFHWTAPAA. At Tyr-67 the chain carries Phosphotyrosine. Glu-89 is a thiamine diphosphate binding site. Residues Ile-142, Ala-190, Ile-191, Asp-193, and Asn-195 each contribute to the K(+) site. Lys-354 bears the N6-acetyllysine mark.

Heterotetramer of two PDHA1 and two PDHB subunits. The heterotetramer interacts with DLAT, and is part of the multimeric pyruvate dehydrogenase complex that contains multiple copies of pyruvate dehydrogenase (E1), dihydrolipoamide acetyltransferase (DLAT, E2) and lipoamide dehydrogenase (DLD, E3). These subunits are bound to an inner core composed of about 48 DLAT and 12 PDHX molecules. Interacts with DLAT. Requires thiamine diphosphate as cofactor.

Its subcellular location is the mitochondrion matrix. The catalysed reaction is N(6)-[(R)-lipoyl]-L-lysyl-[protein] + pyruvate + H(+) = N(6)-[(R)-S(8)-acetyldihydrolipoyl]-L-lysyl-[protein] + CO2. The pyruvate dehydrogenase complex catalyzes the overall conversion of pyruvate to acetyl-CoA and CO(2), and thereby links the glycolytic pathway to the tricarboxylic cycle. This Pongo abelii (Sumatran orangutan) protein is Pyruvate dehydrogenase E1 component subunit beta, mitochondrial (PDHB).